A 142-amino-acid polypeptide reads, in one-letter code: Transcription antitermination protein NusB (142 aa).

This sequence belongs to the NusB family.

Functionally, involved in transcription antitermination. Required for transcription of ribosomal RNA (rRNA) genes. Binds specifically to the boxA antiterminator sequence of the ribosomal RNA (rrn) operons. The protein is Transcription antitermination protein NusB of Levilactobacillus brevis (strain ATCC 367 / BCRC 12310 / CIP 105137 / JCM 1170 / LMG 11437 / NCIMB 947 / NCTC 947) (Lactobacillus brevis).